The chain runs to 166 residues: Large ribosomal subunit protein mL41 (166 aa).

A mitochondrion-targeting transit peptide spans 1–26; it reads MNNCIKVVPIALRCQQRTISTSSVLE. Positions 136 to 166 are disordered; the sequence is KDGSAKEPSVNEQLTPEEALQRARKTGSDIF.

The protein belongs to the mitochondrion-specific ribosomal protein mL41 family. As to quaternary structure, component of the mitochondrial ribosome large subunit (39S) which comprises a 16S rRNA and about 50 distinct proteins.

The protein resides in the mitochondrion. The polypeptide is Large ribosomal subunit protein mL41 (mRpL41) (Drosophila melanogaster (Fruit fly)).